Here is a 955-residue protein sequence, read N- to C-terminus: Sex determination protein fruitless (955 aa).

2 disordered regions span residues 1–55 (MMAT…HAHS) and 70–89 (IETDVRAPPPPLPPPPLPLP). The segment covering 35-55 (PHGHGHLHSHAHAHGHGHAHS) has biased composition (basic residues). The span at 76-89 (APPPPLPPPPLPLP) shows a compositional bias: pro residues. Residues 131–196 (CDVTLACEGE…MYKGEVNVGQ (66 aa)) enclose the BTB domain. 3 disordered regions span residues 229-288 (LRDS…SMSE), 352-526 (NRSA…LGGG), and 784-814 (ANHQLHQHPPSATHPSHSQSSPHYPSASGAG). Positions 233–246 (AASSPTGRGPSNYT) are enriched in polar residues. Composition is skewed to basic and acidic residues over residues 258–279 (AMRESRDSLRSRCERDLRDELT) and 360–379 (CSDRGSERGTLERTDSRDDL). The span at 387-420 (KDNNNSNSSSTGGNNNNNNNNNNNSSSNNNNSSS) shows a compositional bias: low complexity. Residues 421–446 (NRERNNSGERERERERERERDRDREL) are compositionally biased toward basic and acidic residues. Composition is skewed to low complexity over residues 464–475 (SSSNCDNSLSSS) and 790–814 (QHPPSATHPSHSQSSPHYPSASGAG). The segment at 918–941 (HECPVCGQKFTRRDNMKAHCKIKH) adopts a C2H2-type zinc-finger fold.

Expressed in parts of the adult male brain associated with the courtship song and steps of the male courtship. Also expressed in the larval and pupal male mushroom body and optic lobe. Expressed in pupal female optic lobe.

Its subcellular location is the nucleus. Probably acts as a transcriptional regulator. Part of the somatic sex determination hierarchy; sex determination genes transformer (tra) and transformer-2 (tra-2) switch fru splicing from the male-specific pattern to the female-specific pattern through activation of the female-specific fru 5'-splice site. Vital for the development of males and females. Controls the development of the male specific abdominal muscle of Lawrence. Plays a role in male courtship behavior and sexual orientation. Enhances male-specific expression of takeout in brain-associated fat body. This is Sex determination protein fruitless (fru) from Drosophila melanogaster (Fruit fly).